The following is a 1464-amino-acid chain: DNA polymerase III PolC-type (1464 aa).

The Exonuclease domain maps to 426–582; it reads YVVFDVETTG…YDAEATGRLL (157 aa).

Belongs to the DNA polymerase type-C family. PolC subfamily.

Its subcellular location is the cytoplasm. It catalyses the reaction DNA(n) + a 2'-deoxyribonucleoside 5'-triphosphate = DNA(n+1) + diphosphate. Its function is as follows. Required for replicative DNA synthesis. This DNA polymerase also exhibits 3' to 5' exonuclease activity. The sequence is that of DNA polymerase III PolC-type from Streptococcus thermophilus (strain CNRZ 1066).